A 346-amino-acid chain; its full sequence is UDP-N-acetylenolpyruvoylglucosamine reductase (346 aa).

In terms of domain architecture, FAD-binding PCMH-type spans 18-189; sequence LHAQARAFIA…VSVVFALKTH (172 aa). Arg-165 is a catalytic residue. Ser-240 (proton donor) is an active-site residue. The active site involves Glu-336.

It belongs to the MurB family. It depends on FAD as a cofactor.

The protein localises to the cytoplasm. It catalyses the reaction UDP-N-acetyl-alpha-D-muramate + NADP(+) = UDP-N-acetyl-3-O-(1-carboxyvinyl)-alpha-D-glucosamine + NADPH + H(+). It participates in cell wall biogenesis; peptidoglycan biosynthesis. Its function is as follows. Cell wall formation. This Neisseria gonorrhoeae (strain ATCC 700825 / FA 1090) protein is UDP-N-acetylenolpyruvoylglucosamine reductase.